We begin with the raw amino-acid sequence, 109 residues long: Large ribosomal subunit protein uL24 (109 aa).

Belongs to the universal ribosomal protein uL24 family. As to quaternary structure, part of the 50S ribosomal subunit.

Functionally, one of two assembly initiator proteins, it binds directly to the 5'-end of the 23S rRNA, where it nucleates assembly of the 50S subunit. In terms of biological role, one of the proteins that surrounds the polypeptide exit tunnel on the outside of the subunit. In Legionella pneumophila (strain Paris), this protein is Large ribosomal subunit protein uL24.